Here is a 582-residue protein sequence, read N- to C-terminus: Arginine--tRNA ligase (582 aa).

Positions 128–138 match the 'HIGH' region motif; the sequence is PNLAKEMHVGH.

Belongs to the class-I aminoacyl-tRNA synthetase family. In terms of assembly, monomer.

Its subcellular location is the cytoplasm. It carries out the reaction tRNA(Arg) + L-arginine + ATP = L-arginyl-tRNA(Arg) + AMP + diphosphate. The chain is Arginine--tRNA ligase from Colwellia psychrerythraea (strain 34H / ATCC BAA-681) (Vibrio psychroerythus).